Reading from the N-terminus, the 330-residue chain is Palmitoyltransferase SWF1 (330 aa).

The helical transmembrane segment at 1-21 (MLLFLVFILVVSQVVLLLLSP) threads the bilayer. Residues 22–50 (QFRDKFIFRWYYDEVYKPMILDNSRYRIK) lie on the Cytoplasmic side of the membrane. The helical transmembrane segment at 51 to 71 (FYVVPVFYLSVYSYMVYIFYS) threads the bilayer. Topologically, residues 72 to 86 (RTFAIISPMLTSIET) are lumenal. Residues 87-107 (YVVIPLMLILPLFFGSMSMII) traverse the membrane as a helical segment. At 108–181 (KPDSSNAHQI…GMGNYMYFYS (74 aa)) the chain is on the cytoplasmic side. Residues 134 to 184 (HECRTCKQVKPARSKHCTVCNSCIYLADHHCVWINNCVGMGNYMYFYSFLC) form the DHHC domain. Residues 182–202 (FLCSNLLLLSYSFIRLIFIQF) traverse the membrane as a helical segment. Residues 203 to 218 (NKSAYNTTPTGEKSLL) lie on the Lumenal side of the membrane. The helical transmembrane segment at 219-239 (ILSILCGSFTVILAVYCYFVF) threads the bilayer. At 240 to 330 (ELVNSGMTTN…FINNLREFIG (91 aa)) the chain is on the cytoplasmic side.

Belongs to the DHHC palmitoyltransferase family. SWF1 subfamily.

It localises to the endoplasmic reticulum membrane. It carries out the reaction L-cysteinyl-[protein] + hexadecanoyl-CoA = S-hexadecanoyl-L-cysteinyl-[protein] + CoA. In terms of biological role, palmitoyltransferase that targets several endosomal SNAREs. Palmitoylates the SNAREs at cysteine residues close to the cytoplasmic end of their transmembrane domain. May have a role in the cellular quality control of transmembrane domain-containing proteins. This is Palmitoyltransferase SWF1 (SWF1) from Candida glabrata (strain ATCC 2001 / BCRC 20586 / JCM 3761 / NBRC 0622 / NRRL Y-65 / CBS 138) (Yeast).